Here is a 336-residue protein sequence, read N- to C-terminus: Glycerol-3-phosphate dehydrogenase [NAD(P)+] (336 aa).

NADPH is bound by residues Ser14, Trp15, Arg35, Arg36, and Lys109. 2 residues coordinate sn-glycerol 3-phosphate: Lys109 and Gly139. Ala143 contributes to the NADPH binding site. The sn-glycerol 3-phosphate site is built by Lys194, Asp247, Ser257, Arg258, and Asn259. The Proton acceptor role is filled by Lys194. Residue Arg258 participates in NADPH binding. Residue Glu284 coordinates NADPH.

The protein belongs to the NAD-dependent glycerol-3-phosphate dehydrogenase family.

The protein localises to the cytoplasm. The catalysed reaction is sn-glycerol 3-phosphate + NAD(+) = dihydroxyacetone phosphate + NADH + H(+). It catalyses the reaction sn-glycerol 3-phosphate + NADP(+) = dihydroxyacetone phosphate + NADPH + H(+). It participates in membrane lipid metabolism; glycerophospholipid metabolism. Functionally, catalyzes the reduction of the glycolytic intermediate dihydroxyacetone phosphate (DHAP) to sn-glycerol 3-phosphate (G3P), the key precursor for phospholipid synthesis. This is Glycerol-3-phosphate dehydrogenase [NAD(P)+] from Streptomyces avermitilis (strain ATCC 31267 / DSM 46492 / JCM 5070 / NBRC 14893 / NCIMB 12804 / NRRL 8165 / MA-4680).